Here is a 108-residue protein sequence, read N- to C-terminus: MAAPGAGDPLNAKNGNAPFAQRIDPSREKLTPAQLQFMRQVQLAQWQKTLPQRRTRNIMTGLGIGALVLAIYGYTFYSVAQERFLDELEDEAKAARARALERERASGP.

The disordered stretch occupies residues 1–25 (MAAPGAGDPLNAKNGNAPFAQRIDP). A2 carries the N-acetylalanine modification. The Mitochondrial matrix segment spans residues 2–57 (AAPGAGDPLNAKNGNAPFAQRIDPSREKLTPAQLQFMRQVQLAQWQKTLPQRRTRN). Residues 58–80 (IMTGLGIGALVLAIYGYTFYSVA) traverse the membrane as a helical segment. Residues 78 to 106 (SVAQERFLDELEDEAKAARARALERERAS) are a coiled coil. Residues 81–108 (QERFLDELEDEAKAARARALERERASGP) are Mitochondrial intermembrane-facing.

The protein belongs to the COA3 family. Along with COX14, core component of the MITRAC (mitochondrial translation regulation assembly intermediate of cytochrome c oxidase complex) complex. Interacts with MT-CO1/COX1, SMIM20, SURF1 and TIMM21.

It localises to the mitochondrion inner membrane. Functionally, core component of the MITRAC (mitochondrial translation regulation assembly intermediate of cytochrome c oxidase complex) complex, that regulates cytochrome c oxidase assembly. MITRAC complexes regulate both translation of mitochondrial encoded components and assembly of nuclear-encoded components imported in mitochondrion. Required for efficient translation of MT-CO1 and mitochondrial respiratory chain complex IV assembly. The chain is Cytochrome c oxidase assembly factor 3 homolog, mitochondrial (Coa3) from Mus musculus (Mouse).